The primary structure comprises 352 residues: 4-hydroxy-2-oxovalerate aldolase (352 aa).

The region spanning 13-265 is the Pyruvate carboxyltransferase domain; that stretch reads VRLTDTSLRD…KTGIDFFDIA (253 aa). 21 to 22 lines the substrate pocket; that stretch reads RD. Asp-22 serves as a coordination point for Mn(2+). The active-site Proton acceptor is His-25. Ser-175 and His-204 together coordinate substrate. Mn(2+) contacts are provided by His-204 and His-206. Residue Tyr-295 participates in substrate binding.

Belongs to the 4-hydroxy-2-oxovalerate aldolase family.

It carries out the reaction (S)-4-hydroxy-2-oxopentanoate = acetaldehyde + pyruvate. This chain is 4-hydroxy-2-oxovalerate aldolase, found in Mycobacterium avium (strain 104).